We begin with the raw amino-acid sequence, 92 residues long: UPF0250 protein VP0718 (92 aa).

The protein belongs to the UPF0250 family.

This chain is UPF0250 protein VP0718, found in Vibrio parahaemolyticus serotype O3:K6 (strain RIMD 2210633).